The sequence spans 453 residues: Tubulin alpha chain (453 aa).

Glutamine 11 contributes to the GTP binding site. The residue at position 40 (lysine 40) is an N6-acetyllysine. Residues glutamate 71, glycine 144, threonine 145, threonine 179, asparagine 206, and asparagine 228 each coordinate GTP. Residue glutamate 71 participates in Mg(2+) binding. Residue glutamate 254 is part of the active site.

Belongs to the tubulin family. As to quaternary structure, dimer of alpha and beta chains. A typical microtubule is a hollow water-filled tube with an outer diameter of 25 nm and an inner diameter of 15 nM. Alpha-beta heterodimers associate head-to-tail to form protofilaments running lengthwise along the microtubule wall with the beta-tubulin subunit facing the microtubule plus end conferring a structural polarity. Microtubules usually have 13 protofilaments but different protofilament numbers can be found in some organisms and specialized cells. It depends on Mg(2+) as a cofactor. Post-translationally, undergoes a tyrosination/detyrosination cycle, the cyclic removal and re-addition of a C-terminal tyrosine residue by the enzymes tubulin tyrosine carboxypeptidase (TTCP) and tubulin tyrosine ligase (TTL), respectively. In terms of processing, acetylation of alpha chains at Lys-40 stabilizes microtubules and affects affinity and processivity of microtubule motors. This modification has a role in multiple cellular functions, ranging from cell motility, cell cycle progression or cell differentiation to intracellular trafficking and signaling.

The protein resides in the cytoplasm. It localises to the cytoskeleton. It carries out the reaction GTP + H2O = GDP + phosphate + H(+). Functionally, tubulin is the major constituent of microtubules, a cylinder consisting of laterally associated linear protofilaments composed of alpha- and beta-tubulin heterodimers. Microtubules grow by the addition of GTP-tubulin dimers to the microtubule end, where a stabilizing cap forms. Below the cap, tubulin dimers are in GDP-bound state, owing to GTPase activity of alpha-tubulin. This is Tubulin alpha chain from Plasmodium falciparum (isolate K1 / Thailand).